Consider the following 375-residue polypeptide: Aminomethyltransferase (375 aa).

The protein belongs to the GcvT family. As to quaternary structure, the glycine cleavage system is composed of four proteins: P, T, L and H.

It catalyses the reaction N(6)-[(R)-S(8)-aminomethyldihydrolipoyl]-L-lysyl-[protein] + (6S)-5,6,7,8-tetrahydrofolate = N(6)-[(R)-dihydrolipoyl]-L-lysyl-[protein] + (6R)-5,10-methylene-5,6,7,8-tetrahydrofolate + NH4(+). Its function is as follows. The glycine cleavage system catalyzes the degradation of glycine. This chain is Aminomethyltransferase, found in Cupriavidus taiwanensis (strain DSM 17343 / BCRC 17206 / CCUG 44338 / CIP 107171 / LMG 19424 / R1) (Ralstonia taiwanensis (strain LMG 19424)).